Reading from the N-terminus, the 188-residue chain is GTPase KRas (188 aa).

GTP-binding positions include 10 to 18, 29 to 35, 59 to 60, and 116 to 119; these read GAGGVGKSA, VDEYDPT, AG, and NKYD. The short motif at 32–40 is the Effector region element; the sequence is YDPTIEDSY. Residues 167-188 form a disordered region; sequence KEKMSKEGKKKKKKSKTKCILM. At C185 the chain carries Cysteine methyl ester. C185 is lipidated: S-farnesyl cysteine. Positions 186 to 188 are cleaved as a propeptide — removed in mature form; that stretch reads ILM.

It belongs to the small GTPase superfamily. Ras family.

The protein localises to the cell membrane. Its subcellular location is the cytoplasm. The enzyme catalyses GTP + H2O = GDP + phosphate + H(+). Alternates between an inactive form bound to GDP and an active form bound to GTP. Activated by a guanine nucleotide-exchange factor (GEF) and inactivated by a GTPase-activating protein (GAP). In terms of biological role, ras proteins bind GDP/GTP and possess intrinsic GTPase activity. Plays an important role in the regulation of cell proliferation. May play a role in promoting oncogenic events by inducing transcriptional silencing of tumor suppressor genes (TSGs). This chain is GTPase KRas (kras), found in Kryptolebias marmoratus (Mangrove killifish).